The sequence spans 230 residues: Ribonuclease 3 (230 aa).

The 124-residue stretch at 10–133 folds into the RNase III domain; that stretch reads DPRLLSRIGY…IIGAIYLDSS (124 aa). Residue E46 participates in Mg(2+) binding. D50 is an active-site residue. Positions 119 and 122 each coordinate Mg(2+). E122 is a catalytic residue. Residues 161–230 form the DRBM domain; the sequence is DPKSRLQEYL…AAEILKLLEQ (70 aa).

It belongs to the ribonuclease III family. As to quaternary structure, homodimer. It depends on Mg(2+) as a cofactor.

The protein resides in the cytoplasm. The catalysed reaction is Endonucleolytic cleavage to 5'-phosphomonoester.. Its function is as follows. Digests double-stranded RNA. Involved in the processing of primary rRNA transcript to yield the immediate precursors to the large and small rRNAs (23S and 16S). Processes some mRNAs, and tRNAs when they are encoded in the rRNA operon. Processes pre-crRNA and tracrRNA of type II CRISPR loci if present in the organism. This is Ribonuclease 3 (rnc) from Acinetobacter baumannii (strain AB307-0294).